Reading from the N-terminus, the 420-residue chain is C-methyltransferase NovU (420 aa).

It belongs to the methyltransferase superfamily.

Its pathway is antibiotic biosynthesis; novobiocin biosynthesis. C-methyltransferase that acts together with NovW to catalyze the formation of dTDP-4-keto-6-deoxy-5-C-methyl-L-lyxo-hexose from dTDP-4-keto-6-deoxy-D-glucose in the novobiocin biosynthesis pathway, an aminocoumarin family antibiotic that targets bacterial DNA gyrases. The chain is C-methyltransferase NovU (novU) from Streptomyces niveus (Streptomyces spheroides).